The sequence spans 493 residues: ATP-dependent RNA helicase dbp3 (493 aa).

Positions 1-38 (MTKRDYQNDTTAESRPTKKSKGEKKVKETKEKKEKKVK) are disordered. A compositionally biased stretch (basic and acidic residues) spans 23–34 (EKKVKETKEKKE). A Q motif motif is present at residues 97–105 (SFKSPTSIQ). Residues 109–285 (WPLLFGGRDV…STFMSSPVTV (177 aa)) form the Helicase ATP-binding domain. 122 to 129 (AETGSGKT) lines the ATP pocket. The DEAD box motif lies at 232–235 (DEAD). In terms of domain architecture, Helicase C-terminal spans 316 to 462 (RLVQLLKQHQ…EVPEELLKFG (147 aa)).

The protein belongs to the DEAD box helicase family. DDX5/DBP2 subfamily.

The protein localises to the nucleus. It localises to the nucleolus. It carries out the reaction ATP + H2O = ADP + phosphate + H(+). Its function is as follows. ATP-dependent RNA helicase required for 60S ribosomal subunit synthesis. Involved in efficient pre-rRNA processing, predominantly at site A3, which is necessary for the normal formation of 25S and 5.8S rRNAs. The protein is ATP-dependent RNA helicase dbp3 (dbp3) of Aspergillus terreus (strain NIH 2624 / FGSC A1156).